The primary structure comprises 486 residues: Cytochrome P450 monooxygenase aclC (486 aa).

Cysteine 427 is a binding site for heme.

This sequence belongs to the cytochrome P450 family. The cofactor is heme.

The protein operates within mycotoxin biosynthesis. Functionally, cytochrome P450 monooxygenase; part of the gene cluster that mediates the biosynthesis of aspirochlorine (or antibiotic A30641), an unusual halogenated spiro compound with distinctive antifungal properties due to selective inhibition of protein biosynthesis, and which is also active against bacteria, viruses, and murine tumor cells. The non-ribosomal peptide synthetase (NRPS) aclP is responsible the formation of the diketopiperazine (DKP) core from the condensation of 2 phenylalanine residues. One Phe residue is tailored into chlorotyrosine by hydroxylation and chlorination, whereas the second Phe undergoes an unprecedented C-C bond cleavage to be converted into glycine. After formation of the DKP, sulfur is incorporated into the DKP by conjugation with glutathione by aclG, followed by its stepwise degradation to the thiol by aclI, aclJ and aclK, and the dithiol oxidation by aclT. In addition, oxygenases (aclB, aclC, aclL and aclO) and O-methyltransferases (aclM and aclU) act as tailoring enzymes to produce the intermediate dechloroaspirochlorine. Ultimately, chlorination of dechloroaspirochlorine by the halogenase aclH is the last step in the aspirochlorine pathway. This is Cytochrome P450 monooxygenase aclC from Aspergillus oryzae (strain ATCC 42149 / RIB 40) (Yellow koji mold).